A 340-amino-acid polypeptide reads, in one-letter code: Glycerol-3-phosphate dehydrogenase [NAD(P)+] (340 aa).

Residues serine 14, tyrosine 15, histidine 35, and lysine 109 each contribute to the NADPH site. Residues lysine 109, glycine 138, and threonine 140 each coordinate sn-glycerol 3-phosphate. Alanine 142 lines the NADPH pocket. Positions 194, 247, 257, 258, and 259 each coordinate sn-glycerol 3-phosphate. The active-site Proton acceptor is lysine 194. Arginine 258 serves as a coordination point for NADPH. Positions 282 and 284 each coordinate NADPH.

It belongs to the NAD-dependent glycerol-3-phosphate dehydrogenase family.

It localises to the cytoplasm. It catalyses the reaction sn-glycerol 3-phosphate + NAD(+) = dihydroxyacetone phosphate + NADH + H(+). The catalysed reaction is sn-glycerol 3-phosphate + NADP(+) = dihydroxyacetone phosphate + NADPH + H(+). It participates in membrane lipid metabolism; glycerophospholipid metabolism. In terms of biological role, catalyzes the reduction of the glycolytic intermediate dihydroxyacetone phosphate (DHAP) to sn-glycerol 3-phosphate (G3P), the key precursor for phospholipid synthesis. This Photorhabdus laumondii subsp. laumondii (strain DSM 15139 / CIP 105565 / TT01) (Photorhabdus luminescens subsp. laumondii) protein is Glycerol-3-phosphate dehydrogenase [NAD(P)+].